The chain runs to 646 residues: Sulfate transporter 3.2 (646 aa).

Over 1-76 (MSSKRASQYH…GYSLEYLKSD (76 aa)) the chain is Cytoplasmic. Residues 77-97 (VISGITIASLAIPQGISYAQL) traverse the membrane as a helical segment. At 98-99 (AN) the chain is on the extracellular side. Residues 100-120 (LPPILGLYSSLVPPLVYAIMG) form a helical membrane-spanning segment. Topologically, residues 121-124 (SSRD) are cytoplasmic. A helical membrane pass occupies residues 125 to 145 (LAVGTVAVASLLTAAMLGKEV). At 146 to 154 (NAVVNPKLY) the chain is on the extracellular side. A helical membrane pass occupies residues 155–175 (LHLAFTATFFAGLMQTCLGLL). Arg176 is a topological domain (cytoplasmic). The helical transmembrane segment at 177–197 (LGFVVEILSHAAIVGFMGGAA) threads the bilayer. Residues 198-235 (TVVCLQQLKGLLGLHHFTHSTDIVTVLRSIFSQSHMWR) lie on the Extracellular side of the membrane. The chain crosses the membrane as a helical span at residues 236–256 (WESGVLGCCFLIFLLTTKYIS). Residues 257 to 262 (KKRPKL) lie on the Cytoplasmic side of the membrane. A helical transmembrane segment spans residues 263-283 (FWISAMSPLVSVIFGTIFLYF). The Extracellular segment spans residues 284 to 315 (LHDQFHGIQFIGELKKGINPPSITHLVFTPPY). The helical transmembrane segment at 316–336 (VMLALKVGIITGVIALAEGIA) threads the bilayer. Topologically, residues 337-354 (VGRSFAMYKNYNIDGNKE) are cytoplasmic. The helical transmembrane segment at 355–375 (MIAFGMMNILGSFSSCYLTTG) threads the bilayer. The Extracellular portion of the chain corresponds to 376 to 390 (PFSRSAVNYNAGCKT). 2 consecutive transmembrane segments (helical) span residues 391-411 (ALSNVVMAVAVAVTLLFLTPL) and 412-432 (FFYTPLVVLSSIIIAAMLGLV). Residues 433–447 (DYEAAIHLWKLDKFD) lie on the Extracellular side of the membrane. The chain crosses the membrane as a helical span at residues 448 to 468 (FFVCLSAYLGVVFGTIEIGLI). At 469–646 (LSVGISVMRL…DSPVPEFNNV (178 aa)) the chain is on the cytoplasmic side. The 124-residue stretch at 504–627 (HYPQAITRSS…LTVAEAVAAC (124 aa)) folds into the STAS domain.

The protein belongs to the SLC26A/SulP transporter (TC 2.A.53) family. Expressed only in leaves.

The protein resides in the membrane. Its function is as follows. H(+)/sulfate cotransporter that may play a role in the regulation of sulfate assimilation. This is Sulfate transporter 3.2 (SULTR3;2) from Arabidopsis thaliana (Mouse-ear cress).